The sequence spans 454 residues: Chaperone SurA (454 aa).

The N-terminal stretch at 1–28 (MKISSFRKGRWLGALALFAVVCWSMADA) is a signal peptide. PpiC domains are found at residues 177–278 (DREY…KMLA) and 287–386 (LTKT…QVLE). A disordered region spans residues 431 to 454 (LDETPASPGEDAPAGEDSPETFMR). Over residues 443-454 (PAGEDSPETFMR) the composition is skewed to acidic residues.

The protein resides in the periplasm. It catalyses the reaction [protein]-peptidylproline (omega=180) = [protein]-peptidylproline (omega=0). In terms of biological role, chaperone involved in the correct folding and assembly of outer membrane proteins. Recognizes specific patterns of aromatic residues and the orientation of their side chains, which are found more frequently in integral outer membrane proteins. May act in both early periplasmic and late outer membrane-associated steps of protein maturation. This chain is Chaperone SurA, found in Methylococcus capsulatus (strain ATCC 33009 / NCIMB 11132 / Bath).